A 559-amino-acid chain; its full sequence is Potassium-transporting ATPase potassium-binding subunit (559 aa).

The next 12 membrane-spanning stretches (helical) occupy residues 5 to 25, 63 to 83, 132 to 152, 170 to 190, 250 to 270, 283 to 303, 329 to 349, 356 to 376, 379 to 399, 416 to 436, 484 to 504, and 524 to 544; these read GFLLTASFLLILFVLARPLGV, LLAILTLNLLGLTVLFLMLLG, GLTVQNFLSAATGIAVIFALI, LVRITLWILLPLALLIALLFI, LTNMVQMLAIFLIPAALCFAF, LLWAMSIIFVVCVAVVMSAEV, VLVSSLFAVVTTAASCGAVIA, ALGGMVPMWLMQIGEVVFGGV, GLYGMLLFVLLAVFIAGLMIG, MTALAILITPTLVLLGTALAM, LLAFCMFVGRFGVIIPVMAIA, and GALFVGLLIGTVLLVGALTFI.

It belongs to the KdpA family. In terms of assembly, the system is composed of three essential subunits: KdpA, KdpB and KdpC.

It localises to the cell inner membrane. Functionally, part of the high-affinity ATP-driven potassium transport (or Kdp) system, which catalyzes the hydrolysis of ATP coupled with the electrogenic transport of potassium into the cytoplasm. This subunit binds the periplasmic potassium ions and delivers the ions to the membrane domain of KdpB through an intramembrane tunnel. This Citrobacter koseri (strain ATCC BAA-895 / CDC 4225-83 / SGSC4696) protein is Potassium-transporting ATPase potassium-binding subunit.